We begin with the raw amino-acid sequence, 1066 residues long: Kinesin-like protein Klp61F (1066 aa).

The Kinesin motor domain maps to 19–356 (NIQVYVRVRP…LEYAHRAKNI (338 aa)). 103-110 (GQTGTGKT) contacts ATP. A coiled-coil region spans residues 362 to 462 (VNQKLTKKTV…KTEENLLNTK (101 aa)). Threonine 520 is modified (phosphothreonine). Coiled coils occupy residues 540-569 (DRMQDNLEMIGGSLNLYQDQQAALKEQLSQ), 639-738 (LMSK…QIKN), 808-875 (CSML…LITE), and 889-918 (DLVQESNRQFSEHAEHQRQQLQICEQELVR). Threonine 933 bears the Phosphothreonine mark. Serine 949 carries the post-translational modification Phosphoserine. Positions 990 to 1002 (ELSETETIMNSTP) are enriched in polar residues. Disordered regions lie at residues 990-1009 (ELSETETIMNSTPIEPVDGV) and 1016-1066 (GTTR…ENVA). Over residues 1033–1051 (GGKRSSSLSRSLTPSKTSP) the composition is skewed to low complexity. Serine 1043 is subject to Phosphoserine. Threonine 1045 carries the post-translational modification Phosphothreonine. A phosphoserine mark is found at serine 1050 and serine 1054.

Belongs to the TRAFAC class myosin-kinesin ATPase superfamily. Kinesin family. BimC subfamily. As to quaternary structure, homotetramer. Consists of two pairs of polypeptides associated by coiled-coil interactions to form two homodimers. The homodimers are linked by lateral interactions between their coiled-coil regions to form a bipolar homotetramer consisting of a central rod with two motor domains projecting from either end. Parallel coiled coils extend from each pair of motor heads, switch to two antiparallel coiled coils in the central region and then back to parallel coiled coils. Interacts with Wee1. Post-translationally, phosphorylation is required for localization to mitotic spindles. Phosphorylation of Thr-933 during mitosis controls association with the spindle apparatus. Phosphorylated in vitro by Wee1.

Its subcellular location is the cytoplasm. The protein localises to the cytoskeleton. It is found in the spindle. It localises to the spindle pole. Functionally, important role in mitotic dividing cells. Microtubule motor required for spindle body separation. Slow plus-end directed microtubule motor capable of cross-linking and sliding apart antiparallel microtubules, thereby pushing apart the associated spindle poles during spindle assembly and function. Forms cross-links between microtubules within interpolar microtubule bundles. Contributes to the length of the metaphase spindle, maintains the prometaphase spindle by antagonizing Ncd, drives anaphase B, and also contributes to normal chromosome congression, kinetochore spacing, and anaphase A rates. Displays microtubule-stimulated ATPase activity. Required for normal fusome organization. Required in non-mitotic cells for transport of secretory proteins from the Golgi complex to the cell surface. This Drosophila melanogaster (Fruit fly) protein is Kinesin-like protein Klp61F.